A 151-amino-acid polypeptide reads, in one-letter code: 3-hydroxyacyl-[acyl-carrier-protein] dehydratase FabZ (151 aa).

The active site involves His57.

The protein belongs to the thioester dehydratase family. FabZ subfamily.

It localises to the cytoplasm. The catalysed reaction is a (3R)-hydroxyacyl-[ACP] = a (2E)-enoyl-[ACP] + H2O. Involved in unsaturated fatty acids biosynthesis. Catalyzes the dehydration of short chain beta-hydroxyacyl-ACPs and long chain saturated and unsaturated beta-hydroxyacyl-ACPs. The chain is 3-hydroxyacyl-[acyl-carrier-protein] dehydratase FabZ from Prochlorococcus marinus (strain SARG / CCMP1375 / SS120).